Here is a 160-residue protein sequence, read N- to C-terminus: uncharacterized protein (160 aa).

Residues cysteine 26, cysteine 28, cysteine 50, and histidine 61 each contribute to the Zn(2+) site. The GRF-type; atypical zinc finger occupies 26-69 (CWCGEEIITFTSKTKENPYRRFYRCAIAMKRENEEHLFKWVDEA).

This is an uncharacterized protein from Arabidopsis thaliana (Mouse-ear cress).